A 248-amino-acid chain; its full sequence is Ferric nitrobindin-like protein (248 aa).

Composition is skewed to polar residues over residues 1–25 (MSSDKANNQSPDQGANTPAESTNSG) and 32–43 (QAVNLAAEQSKS). Residues 1 to 49 (MSSDKANNQSPDQGANTPAESTNSGPKLDGNQAVNLAAEQSKSTADKNL) form a disordered region. Positions 82 to 88 (GVWRGQG) match the GXWXGXG motif. Positions 118 to 147 (SRTWKINPPAEEGAEADGDEASAESAGEPE) are disordered. A compositionally biased stretch (acidic residues) spans 129–139 (EGAEADGDEAS).

This sequence belongs to the nitrobindin family.

In Corynebacterium urealyticum (strain ATCC 43042 / DSM 7109), this protein is Ferric nitrobindin-like protein.